We begin with the raw amino-acid sequence, 364 residues long: Mannose-1-phosphate guanyltransferase (364 aa).

The protein belongs to the transferase hexapeptide repeat family.

The protein localises to the cytoplasm. The catalysed reaction is alpha-D-mannose 1-phosphate + GTP + H(+) = GDP-alpha-D-mannose + diphosphate. It functions in the pathway nucleotide-sugar biosynthesis; GDP-alpha-D-mannose biosynthesis; GDP-alpha-D-mannose from alpha-D-mannose 1-phosphate (GTP route): step 1/1. In terms of biological role, involved in cell wall synthesis where it is required for glycosylation. Involved in cell cycle progression through cell-size checkpoint. This chain is Mannose-1-phosphate guanyltransferase (mpg1), found in Hypocrea jecorina (Trichoderma reesei).